We begin with the raw amino-acid sequence, 57 residues long: Large ribosomal subunit protein bL32 (57 aa).

This sequence belongs to the bacterial ribosomal protein bL32 family.

The polypeptide is Large ribosomal subunit protein bL32 (Streptomyces griseus subsp. griseus (strain JCM 4626 / CBS 651.72 / NBRC 13350 / KCC S-0626 / ISP 5235)).